The following is a 663-amino-acid chain: Glucans biosynthesis glucosyltransferase H (663 aa).

6 helical membrane-spanning segments follow: residues 64-86 (WMLGLMTIAMGVAGWKASFDTIA), 101-123 (LAPLFLALSLWFCTALIGFVVLM), 413-435 (LVIGVLSYALSPLWFFCLSAGLI), 470-492 (AWAMIITFVLLFGPKILGAILVL), 558-580 (EAWAAMGWISLSGLILAASFWFT), and 584-606 (LTATAPILAGLVLAVPLTMLGAH).

This sequence belongs to the glycosyltransferase 2 family. OpgH subfamily.

The protein resides in the cell inner membrane. Its pathway is glycan metabolism; osmoregulated periplasmic glucan (OPG) biosynthesis. Its function is as follows. Involved in the biosynthesis of osmoregulated periplasmic glucans (OPGs). In Caulobacter vibrioides (strain ATCC 19089 / CIP 103742 / CB 15) (Caulobacter crescentus), this protein is Glucans biosynthesis glucosyltransferase H.